The sequence spans 301 residues: Asialoglycoprotein receptor 2 (301 aa).

The disordered stretch occupies residues 1 to 29 (MEKDFQDIQQLDSEENDHQLIGDEEQGSH). The Cytoplasmic portion of the chain corresponds to 1 to 58 (MEKDFQDIQQLDSEENDHQLIGDEEQGSHVQNLRTENPRWGGQPPSRPFPQRLCSKFR). Residue S13 is modified to Phosphoserine. C54 is lipidated: S-palmitoyl cysteine. Residues 59-79 (LSLLALAFNILLLVVICVVSS) form a helical; Signal-anchor for type II membrane protein membrane-spanning segment. The Extracellular segment spans residues 80–301 (QSMQLQKEFW…ACERKRDITY (222 aa)). 3 N-linked (GlcNAc...) asparagine glycosylation sites follow: N97, N119, and N165. One can recognise a C-type lectin domain in the interval 169–295 (CCPVNWVEFG…QQVNRWACER (127 aa)). 3 cysteine pairs are disulfide-bonded: C170-C181, C198-C293, and C271-C285.

As to quaternary structure, interacts with LASS2. As to expression, expressed exclusively in hepatic parenchymal cells.

It is found in the membrane. In terms of biological role, mediates the endocytosis of plasma glycoproteins to which the terminal sialic acid residue on their complex carbohydrate moieties has been removed. The receptor recognizes terminal galactose and N-acetylgalactosamine units. After ligand binding to the receptor, the resulting complex is internalized and transported to a sorting organelle, where receptor and ligand are disassociated. The receptor then returns to the cell membrane surface. The polypeptide is Asialoglycoprotein receptor 2 (Asgr2) (Rattus norvegicus (Rat)).